The primary structure comprises 308 residues: Probable manganese-dependent inorganic pyrophosphatase (308 aa).

Residues His-9, Asp-13, Asp-15, Asp-75, His-97, and Asp-149 each coordinate Mn(2+).

This sequence belongs to the PPase class C family. It depends on Mn(2+) as a cofactor.

The protein localises to the cytoplasm. It carries out the reaction diphosphate + H2O = 2 phosphate + H(+). This Listeria welshimeri serovar 6b (strain ATCC 35897 / DSM 20650 / CCUG 15529 / CIP 8149 / NCTC 11857 / SLCC 5334 / V8) protein is Probable manganese-dependent inorganic pyrophosphatase.